A 179-amino-acid chain; its full sequence is Ubiquitin-conjugating enzyme E2 C (179 aa).

The interval 1–31 is disordered; sequence MASQNRDPAATSVAAARKGAEPSGGAARGPV. An N-acetylalanine modification is found at A2. S3 bears the Phosphoserine mark. A UBC core domain is found at 30 to 175; the sequence is PVGKRLQQEL…LQETYSKQVT (146 aa). The active-site Glycyl thioester intermediate is C114.

The protein belongs to the ubiquitin-conjugating enzyme family. Component of the APC/C complex, composed of at least 14 distinct subunits that assemble into a complex of at least 19 chains with a combined molecular mass of around 1.2 MDa. Within this complex, directly interacts with ANAPC2. Autoubiquitinated by the APC/C complex, leading to its degradation by the proteasome. Its degradation plays a central role in APC/C regulation, allowing cyclin-A accumulation before S phase entry. APC/C substrates inhibit the autoubiquitination of UBE2C/UBCH10 but not its E2 function, hence APC/C remaining active until its substrates have been destroyed.

The catalysed reaction is S-ubiquitinyl-[E1 ubiquitin-activating enzyme]-L-cysteine + [E2 ubiquitin-conjugating enzyme]-L-cysteine = [E1 ubiquitin-activating enzyme]-L-cysteine + S-ubiquitinyl-[E2 ubiquitin-conjugating enzyme]-L-cysteine.. It carries out the reaction S-ubiquitinyl-[E1 ubiquitin-activating enzyme]-L-cysteine + [acceptor protein]-L-lysine = [E1 ubiquitin-activating enzyme]-L-cysteine + N(6)-monoubiquitinyl-[acceptor protein]-L-lysine.. Its pathway is protein modification; protein ubiquitination. In terms of biological role, accepts ubiquitin from the E1 complex and catalyzes its covalent attachment to other proteins. In vitro catalyzes 'Lys-11'- and 'Lys-48'-linked polyubiquitination. Acts as an essential factor of the anaphase promoting complex/cyclosome (APC/C), a cell cycle-regulated ubiquitin ligase that controls progression through mitosis. Acts by initiating 'Lys-11'-linked polyubiquitin chains on APC/C substrates, leading to the degradation of APC/C substrates by the proteasome and promoting mitotic exit. This chain is Ubiquitin-conjugating enzyme E2 C (UBE2C), found in Homo sapiens (Human).